A 698-amino-acid chain; its full sequence is Elongation factor G (698 aa).

The region spanning 10–285 is the tr-type G domain; sequence AGTRNIGIMA…AVVDFLPNPL (276 aa). Residues 19 to 26, 83 to 87, and 137 to 140 each bind GTP; these read AHIDAGKT, DTPGH, and NKMD.

Belongs to the TRAFAC class translation factor GTPase superfamily. Classic translation factor GTPase family. EF-G/EF-2 subfamily.

It localises to the cytoplasm. In terms of biological role, catalyzes the GTP-dependent ribosomal translocation step during translation elongation. During this step, the ribosome changes from the pre-translocational (PRE) to the post-translocational (POST) state as the newly formed A-site-bound peptidyl-tRNA and P-site-bound deacylated tRNA move to the P and E sites, respectively. Catalyzes the coordinated movement of the two tRNA molecules, the mRNA and conformational changes in the ribosome. The chain is Elongation factor G from Frankia casuarinae (strain DSM 45818 / CECT 9043 / HFP020203 / CcI3).